We begin with the raw amino-acid sequence, 330 residues long: Biotin synthase (330 aa).

The Radical SAM core domain occupies 42 to 268 (YYGRKVKLNM…INPSKEIRIA (227 aa)). Cys-60, Cys-64, and Cys-67 together coordinate [4Fe-4S] cluster. Cys-103, Cys-136, Cys-196, and Arg-266 together coordinate [2Fe-2S] cluster.

This sequence belongs to the radical SAM superfamily. Biotin synthase family. As to quaternary structure, homodimer. Requires [4Fe-4S] cluster as cofactor. The cofactor is [2Fe-2S] cluster.

The enzyme catalyses (4R,5S)-dethiobiotin + (sulfur carrier)-SH + 2 reduced [2Fe-2S]-[ferredoxin] + 2 S-adenosyl-L-methionine = (sulfur carrier)-H + biotin + 2 5'-deoxyadenosine + 2 L-methionine + 2 oxidized [2Fe-2S]-[ferredoxin]. The protein operates within cofactor biosynthesis; biotin biosynthesis; biotin from 7,8-diaminononanoate: step 2/2. In terms of biological role, catalyzes the conversion of dethiobiotin (DTB) to biotin by the insertion of a sulfur atom into dethiobiotin via a radical-based mechanism. The sequence is that of Biotin synthase from Macrococcus caseolyticus (strain JCSC5402) (Macrococcoides caseolyticum).